Consider the following 118-residue polypeptide: Diacylglycerol kinase (118 aa).

Glutamate 28 lines the a divalent metal cation pocket. Helical transmembrane passes span 29–49 (TAFR…FFLG) and 55–75 (IILM…NSAV). The active-site Proton acceptor is glutamate 69. An a divalent metal cation-binding site is contributed by glutamate 76. A helical membrane pass occupies residues 98–118 (SASVFIALCIVGIVWGGILFF).

Belongs to the bacterial diacylglycerol kinase family. Mg(2+) is required as a cofactor.

The protein localises to the cell inner membrane. It carries out the reaction a 1,2-diacyl-sn-glycerol + ATP = a 1,2-diacyl-sn-glycero-3-phosphate + ADP + H(+). Its function is as follows. Catalyzes the ATP-dependent phosphorylation of sn-l,2-diacylglycerol (DAG) to phosphatidic acid. Involved in the recycling of diacylglycerol produced as a by-product during membrane-derived oligosaccharide (MDO) biosynthesis. This is Diacylglycerol kinase (dgkA) from Haemophilus influenzae (strain ATCC 51907 / DSM 11121 / KW20 / Rd).